Reading from the N-terminus, the 167-residue chain is MVIRLNNVGRDAYLAPFGGQPAGYKRQGELLGGRNFALHELDLKFALHELLETRGWIWDLHLGFPRVPLGREQYGRTGFDNLESDRTLATLRWTHFTVANVTGRSYGAYLHVRKGNKAKGFKRITWDGFLGIFDGFKGTDQPWDETVRGTDASQYGCNAACLSQLRM.

This is an uncharacterized protein from Aquifex aeolicus (strain VF5).